Consider the following 655-residue polypeptide: Ubiquilin-3 (655 aa).

The Ubiquitin-like domain maps to 22–98 (IKVTVKTPKD…LVIKRQHRAM (77 aa)). The interval 102–124 (CPAASVPTQGPSPGSLPQPSSIY) is disordered. Residues 110–122 (QGPSPGSLPQPSS) are compositionally biased toward low complexity. The 40-residue stretch at 194–233 (NPHMQQLIQHNPEIGHILNNPEIMRQTLEFLRNPAMMQEM) folds into the STI1 domain. Disordered stretches follow at residues 277–330 (PFAT…PDIR), 364–399 (ASAL…LPEE), and 412–447 (FLRY…LVSG). A compositionally biased stretch (low complexity) spans 279 to 290 (ATATTDNATTTT). The span at 318–330 (GRQDGDQDAPDIR) shows a compositional bias: basic and acidic residues. Positions 377-395 (VNRVPPSSPSSQEPGSGQP) are enriched in low complexity. Polar residues predominate over residues 432 to 441 (KSSTGHSTNL). In terms of domain architecture, UBA spans 609 to 655 (QLQPEAHFQVQLEQLRSMGFLNREANLQALIATGGDVDAAVEKLRQS).

Testis specific.

This Homo sapiens (Human) protein is Ubiquilin-3 (UBQLN3).